The sequence spans 548 residues: Nonribosomal peptide synthetase 8 (548 aa).

The region spanning 1–77 (MNSLDQWRDT…QLRGENRSGP (77 aa)) is the Carrier domain. Ser35 is subject to O-(pantetheine 4'-phosphoryl)serine. A condensation region spans residues 122–537 (MAPISSIQEF…FKSLIAELAA (416 aa)).

The protein belongs to the NRP synthetase family.

The protein operates within mycotoxin biosynthesis. Its function is as follows. Nonribosomal peptide synthetase; part of the gene cluster that mediates the biosynthesis of fumonisins B1 (FB1), B2 (FB2), B3 (FB3), and B4 (FB4), which are carcinogenic mycotoxins. Within the pathway FUM14 catalyzes esterification of CoA-activated tricarballylic acid to the C-14 and C-15 hydroxyls of the fumonisin backbone. The biosynthesis starts with the FUM1-catalyzed carbon chain assembly from one molecule of acetyl-CoA, eight molecules of malonyl-CoA, and two molecules of methionine (in S-adenosyl form). The C18 polyketide chain is released from the enzyme by a nucleophilic attack of a carbanion, which is derived from R-carbon of alanine by decarboxylation, on the carbonyl carbon of polyketide acyl chain. This step is catalyzed by the pyridoxal 5'-phosphate-dependent aminoacyl transferase FUM8. The resultant 3-keto intermediate is then stereospecifically reduced to a 3-hydroxyl product by reductase FUM13. Subsequent oxidations at C-10 by the cytochrome P450 monooxygenase FUM2, C-14 and C-15 by FUM6, FUM12 or FUM15, tricarballylic esterification of the hydroxyl groups on C-14 and C-15 by acyltransferase FUM14, and C-5 hydroxylation by 2-keto-glutarate-dependent dioxygenase FUM3 furnish the biosynthesis of fumonisins. The tricarballylic moieties are most likely derived from the citric acid cycle, and their addition to the carbon backbone may involve FUM7, FUM10, FUM11 and FUM14. This is Nonribosomal peptide synthetase 8 from Gibberella moniliformis (strain M3125 / FGSC 7600) (Maize ear and stalk rot fungus).